Reading from the N-terminus, the 509-residue chain is Histidine ammonia-lyase (509 aa).

Positions 144-146 (ASG) form a cross-link, 5-imidazolinone (Ala-Gly). Residue Ser-145 is modified to 2,3-didehydroalanine (Ser).

The protein belongs to the PAL/histidase family. Contains an active site 4-methylidene-imidazol-5-one (MIO), which is formed autocatalytically by cyclization and dehydration of residues Ala-Ser-Gly.

Its subcellular location is the cytoplasm. The catalysed reaction is L-histidine = trans-urocanate + NH4(+). It participates in amino-acid degradation; L-histidine degradation into L-glutamate; N-formimidoyl-L-glutamate from L-histidine: step 1/3. The sequence is that of Histidine ammonia-lyase from Pseudoalteromonas atlantica (strain T6c / ATCC BAA-1087).